Reading from the N-terminus, the 459-residue chain is Periodic tryptophan protein 1 homolog (459 aa).

Residues 44-84 form a disordered region; the sequence is GDTQQELDEESDDDAEEGENAEEDQNDMDVDDHADANSENR. The segment covering 48-73 has biased composition (acidic residues); the sequence is QELDEESDDDAEEGENAEEDQNDMDV. The segment covering 74–84 has biased composition (basic and acidic residues); the sequence is DDHADANSENR. WD repeat units lie at residues 168-214, 232-272, 275-315, 321-361, and 365-405; these read LLPS…AIEP, GHKD…PHTT, AFGK…GVNS, KVDG…QLLW, and AHNE…AKHV. Phosphoserine is present on Ser-385.

The protein belongs to the WD repeat PWP1 family. Interacts with Mybbp1A. Post-translationally, phosphorylated in response to nutrient-activated TORC1 signaling. As to expression, detected in the germline of adult testis and ovary (at protein level). Detected in ovary somatic cells, in zfh1-positive cyst cells in the testis and absent in differentiated cyst cells (at protein level).

It is found in the nucleus. The protein resides in the nucleolus. The protein localises to the chromosome. It localises to the nucleoplasm. In terms of biological role, chromatin-associated factor that regulates transcription. Regulates Pol I-mediated rRNA biogenesis and, probably, Pol III-mediated transcription. Regulates the localization to the nucleolus of Cdk7, a regulator of the Pol I-elongation factor TFIIH. Acts as a regulator of cell proliferation and tissue growth as part of the TORC1 and Myc signaling pathway in response to nutrients. Required in males for both germline stem cell (GSC) maintenance and early stages of germ cell differentiation of germ cell cysts. Not required for female germline stem cell (GSC) maintenance, but necessary to regulate germ cell differentiation and egg chamber development. In female somatic cells, required for follicle stem cell survival and maintenance. The polypeptide is Periodic tryptophan protein 1 homolog (Drosophila melanogaster (Fruit fly)).